We begin with the raw amino-acid sequence, 124 residues long: Small ribosomal subunit protein uS12 (124 aa).

D89 is modified (3-methylthioaspartic acid).

The protein belongs to the universal ribosomal protein uS12 family. As to quaternary structure, part of the 30S ribosomal subunit. Contacts proteins S8 and S17. May interact with IF1 in the 30S initiation complex.

Functionally, with S4 and S5 plays an important role in translational accuracy. Its function is as follows. Interacts with and stabilizes bases of the 16S rRNA that are involved in tRNA selection in the A site and with the mRNA backbone. Located at the interface of the 30S and 50S subunits, it traverses the body of the 30S subunit contacting proteins on the other side and probably holding the rRNA structure together. The combined cluster of proteins S8, S12 and S17 appears to hold together the shoulder and platform of the 30S subunit. This Haemophilus ducreyi (strain 35000HP / ATCC 700724) protein is Small ribosomal subunit protein uS12.